Reading from the N-terminus, the 200-residue chain is Small ribosomal subunit protein mS26 (200 aa).

The N-terminal 27 residues, 1 to 27, are a transit peptide targeting the mitochondrion; sequence MLRALNRLAARPGGQPPTLLLLPVRGR. Residue Lys159 is modified to N6-acetyllysine.

This sequence belongs to the mitochondrion-specific ribosomal protein mS26 family. Component of the mitochondrial ribosome small subunit (28S) which comprises a 12S rRNA and about 30 distinct proteins.

It localises to the mitochondrion. This is Small ribosomal subunit protein mS26 (Mrps26) from Rattus norvegicus (Rat).